The chain runs to 92 residues: MARTVNCVYLNKEADGLDFQLYPGDLGKRIFDNISKEAWGLWQKKQTMLINEKKLNMMNVDDRKFLEEQMTSFLFEGKEVEIEGFVPEKDQD.

Belongs to the Fe(2+)-trafficking protein family.

Functionally, could be a mediator in iron transactions between iron acquisition and iron-requiring processes, such as synthesis and/or repair of Fe-S clusters in biosynthetic enzymes. This chain is Probable Fe(2+)-trafficking protein, found in Shewanella baltica (strain OS223).